A 274-amino-acid polypeptide reads, in one-letter code: Transcriptional activator PerA (274 aa).

The HTH araC/xylS-type domain maps to 168–265; the sequence is DRVIKVIELD…NTTPKKYNGV (98 aa). 2 consecutive DNA-binding regions (H-T-H motif) follow at residues 185–206 and 232–255; these read GDVSSSMFMSDSCLRKQLNKEN and IDEISCLVGFNSTSYFIKVFKEYY.

In terms of biological role, could help in the transcriptional activator of eaeA expression in enteropathogenic E.coli. However, it seems that it is PerC which acts as an activator. This is Transcriptional activator PerA (perA) from Escherichia coli O127:H6 (strain E2348/69 / EPEC).